We begin with the raw amino-acid sequence, 101 residues long: Ubiquitin-related modifier 1 (101 aa).

Residue glycine 101 is modified to 1-thioglycine. A Glycyl lysine isopeptide (Gly-Lys) (interchain with K-? in acceptor proteins) cross-link involves residue glycine 101.

This sequence belongs to the URM1 family. In terms of assembly, component of a complex at least composed of URM1, CTU2/NCS2 and CTU1/ATPBD3. C-terminal thiocarboxylation occurs in 2 steps, it is first acyl-adenylated (-COAMP) via the hesA/moeB/thiF part of MOCS3, then thiocarboxylated (-COSH) via the rhodanese domain of MOCS3.

It localises to the cytoplasm. The protein operates within tRNA modification; 5-methoxycarbonylmethyl-2-thiouridine-tRNA biosynthesis. Its function is as follows. Acts as a sulfur carrier required for 2-thiolation of mcm(5)S(2)U at tRNA wobble positions of cytosolic tRNA(Lys), tRNA(Glu) and tRNA(Gln). Serves as sulfur donor in tRNA 2-thiolation reaction by being thiocarboxylated (-COSH) at its C-terminus by MOCS3. The sulfur is then transferred to tRNA to form 2-thiolation of mcm(5)S(2)U. Also acts as a ubiquitin-like protein (UBL) that is covalently conjugated via an isopeptide bond to lysine residues of target proteins such as MOCS3, ATPBD3, CTU2, USP15 and CAS. The thiocarboxylated form serves as substrate for conjugation and oxidative stress specifically induces the formation of UBL-protein conjugates. The polypeptide is Ubiquitin-related modifier 1 (Homo sapiens (Human)).